Here is a 404-residue protein sequence, read N- to C-terminus: GTPase Obg (404 aa).

One can recognise an Obg domain in the interval 1-159 (MKFIDEARIE…RALRLELKVL (159 aa)). The segment at 22–43 (SFRREKFIPRGGPDGGDGGRGG) is disordered. Residues 33-43 (GPDGGDGGRGG) show a composition bias toward gly residues. The OBG-type G domain maps to 160 to 334 (ADVGLLGMPN…LVFAIQDFLD (175 aa)). GTP contacts are provided by residues 166 to 173 (GMPNAGKS), 191 to 195 (FTTLA), 213 to 216 (DIPG), 284 to 287 (NKLD), and 315 to 317 (SAL). Residues Ser-173 and Thr-193 each contribute to the Mg(2+) site. Residues 373 to 404 (LLAEGETGTGDDGRDGNENDPADEQDTNRPNH) are disordered.

It belongs to the TRAFAC class OBG-HflX-like GTPase superfamily. OBG GTPase family. As to quaternary structure, monomer. The cofactor is Mg(2+).

Its subcellular location is the cytoplasm. Functionally, an essential GTPase which binds GTP, GDP and possibly (p)ppGpp with moderate affinity, with high nucleotide exchange rates and a fairly low GTP hydrolysis rate. Plays a role in control of the cell cycle, stress response, ribosome biogenesis and in those bacteria that undergo differentiation, in morphogenesis control. The polypeptide is GTPase Obg (Aromatoleum aromaticum (strain DSM 19018 / LMG 30748 / EbN1) (Azoarcus sp. (strain EbN1))).